The following is a 158-amino-acid chain: Nucleoside diphosphate kinase (158 aa).

The ATP site is built by Lys-16, Phe-64, Arg-92, Thr-98, Arg-109, and Asn-119. The Pros-phosphohistidine intermediate role is filled by His-122.

This sequence belongs to the NDK family. Mg(2+) serves as cofactor.

It is found in the cytoplasm. The enzyme catalyses a 2'-deoxyribonucleoside 5'-diphosphate + ATP = a 2'-deoxyribonucleoside 5'-triphosphate + ADP. It catalyses the reaction a ribonucleoside 5'-diphosphate + ATP = a ribonucleoside 5'-triphosphate + ADP. Its function is as follows. Major role in the synthesis of nucleoside triphosphates other than ATP. The ATP gamma phosphate is transferred to the NDP beta phosphate via a ping-pong mechanism, using a phosphorylated active-site intermediate. The chain is Nucleoside diphosphate kinase from Haloquadratum walsbyi (strain DSM 16790 / HBSQ001).